Consider the following 169-residue polypeptide: Ribosome maturation factor RimP (169 aa).

It belongs to the RimP family.

Its subcellular location is the cytoplasm. In terms of biological role, required for maturation of 30S ribosomal subunits. The polypeptide is Ribosome maturation factor RimP (Streptomyces avermitilis (strain ATCC 31267 / DSM 46492 / JCM 5070 / NBRC 14893 / NCIMB 12804 / NRRL 8165 / MA-4680)).